We begin with the raw amino-acid sequence, 492 residues long: uncharacterized protein (492 aa).

Transmembrane regions (helical) follow at residues 16–36 (FIAF…VMTM), 39–59 (VGPF…GVVL), 107–127 (SFNG…IPVV), 133–153 (IIIG…FISL), 162–182 (AIFY…ILGI), 210–230 (IIFI…LASI), 243–263 (FLIA…IISG), 291–311 (LVGG…NSLA), 350–370 (VLIS…IPFL), 394–414 (MAAA…FMIF), 429–449 (VSYV…LFPF), and 454–474 (VFNT…VGFF).

This sequence to M.genitalium MG225.

It is found in the cell membrane. This is an uncharacterized protein from Mycoplasma genitalium (strain ATCC 33530 / DSM 19775 / NCTC 10195 / G37) (Mycoplasmoides genitalium).